The following is a 65-amino-acid chain: Neuropeptide-like protein 28 (65 aa).

The first 22 residues, 1-22 (MISTSSILILVFLLACFMATSA), serve as a signal peptide directing secretion. Residues Y29, Y39, Y47, and Y55 each carry the tyrosine amide modification. At W63 the chain carries Tryptophan amide.

The protein belongs to the YARP (YGGW-amide related peptide) family.

The protein localises to the secreted. Functionally, may have antimicrobial activity. In Caenorhabditis elegans, this protein is Neuropeptide-like protein 28 (nlp-28).